Here is a 190-residue protein sequence, read N- to C-terminus: Pyridoxal 5'-phosphate synthase subunit PdxT (190 aa).

46–48 (GES) contributes to the L-glutamine binding site. The active-site Nucleophile is the C78. L-glutamine-binding positions include R108 and 137 to 138 (IR). Catalysis depends on charge relay system residues H174 and E176.

It belongs to the glutaminase PdxT/SNO family. In the presence of PdxS, forms a dodecamer of heterodimers. Only shows activity in the heterodimer.

The enzyme catalyses aldehydo-D-ribose 5-phosphate + D-glyceraldehyde 3-phosphate + L-glutamine = pyridoxal 5'-phosphate + L-glutamate + phosphate + 3 H2O + H(+). It catalyses the reaction L-glutamine + H2O = L-glutamate + NH4(+). It functions in the pathway cofactor biosynthesis; pyridoxal 5'-phosphate biosynthesis. Catalyzes the hydrolysis of glutamine to glutamate and ammonia as part of the biosynthesis of pyridoxal 5'-phosphate. The resulting ammonia molecule is channeled to the active site of PdxS. The protein is Pyridoxal 5'-phosphate synthase subunit PdxT of Chloroflexus aggregans (strain MD-66 / DSM 9485).